A 1432-amino-acid polypeptide reads, in one-letter code: ABC transporter asL7 (1432 aa).

Over residues 1-20 the composition is skewed to polar residues; sequence MFDTTKLQSSTQDGSTSSVT. A disordered region spans residues 1-36; the sequence is MFDTTKLQSSTQDGSTSSVTGEPIFGANDPNSELNP. The region spanning 91–341 is the ABC transporter 1 domain; that stretch reads LALPGMLIRN…FERLGFECPS (251 aa). Asparagine 265 carries N-linked (GlcNAc...) asparagine glycosylation. 6 helical membrane-spanning segments follow: residues 450-470, 484-504, 530-550, 559-579, 597-617, and 702-722; these read PTIV…SLFF, VVLF…VMTL, VLMD…VFYF, GNFF…SGIF, MIPA…MVPI, and IGIV…TSEY. In terms of domain architecture, ABC transporter 2 spans 786–1029; that stretch reads FHWRNVCYDI…TLVEYFERKA (244 aa). 822–829 provides a ligand contact to ATP; that stretch reads GVSGAGKT. N-linked (GlcNAc...) asparagine glycosylation occurs at asparagine 1017. Residues 1076–1095 form a disordered region; that stretch reads LSRLREHGSQSNSHDSEKSE. A run of 6 helical transmembrane segments spans residues 1135 to 1155, 1166 to 1186, 1215 to 1235, 1251 to 1271, 1279 to 1299, and 1317 to 1337; these read FALC…SPLS, VFQL…QFII, IPYY…PIGL, LMWL…HFCI, AGAN…GALI, and LSYL…VTCA. Residue asparagine 1371 is glycosylated (N-linked (GlcNAc...) asparagine). Residues 1402–1422 form a helical membrane-spanning segment; the sequence is FGIIWVYVIFNISAAITLYWV.

This sequence belongs to the ABC transporter superfamily. ABCG family. PDR (TC 3.A.1.205) subfamily.

The protein resides in the cell membrane. Functionally, ABC transporter; part of the gene cluster that mediates the biosynthesis of xenovulene A, an unusual meroterpenoid that has potent inhibitory effects on the human gamma-aminobutyrate A (GABAA) benzodiazepine receptor. The protein is ABC transporter asL7 of Sarocladium schorii (Acremonium strictum (strain IMI 501407)).